The sequence spans 73 residues: uncharacterized protein (73 aa).

The protein belongs to the asfivirus I73R family.

Its subcellular location is the virion. This is an uncharacterized protein from Ornithodoros (relapsing fever ticks).